Reading from the N-terminus, the 449-residue chain is 3-phosphoshikimate 1-carboxyvinyltransferase (449 aa).

Residues Lys28, Ser29, and Arg33 each contribute to the 3-phosphoshikimate site. A phosphoenolpyruvate-binding site is contributed by Lys28. Phosphoenolpyruvate is bound by residues Gly105 and Arg133. 3-phosphoshikimate-binding residues include Ser179, Gln181, Asp332, and Lys359. Gln181 is a binding site for phosphoenolpyruvate. The active-site Proton acceptor is the Asp332. Phosphoenolpyruvate-binding residues include Arg363 and Arg406.

This sequence belongs to the EPSP synthase family. Monomer.

It localises to the cytoplasm. The catalysed reaction is 3-phosphoshikimate + phosphoenolpyruvate = 5-O-(1-carboxyvinyl)-3-phosphoshikimate + phosphate. It participates in metabolic intermediate biosynthesis; chorismate biosynthesis; chorismate from D-erythrose 4-phosphate and phosphoenolpyruvate: step 6/7. In terms of biological role, catalyzes the transfer of the enolpyruvyl moiety of phosphoenolpyruvate (PEP) to the 5-hydroxyl of shikimate-3-phosphate (S3P) to produce enolpyruvyl shikimate-3-phosphate and inorganic phosphate. This Nitrobacter hamburgensis (strain DSM 10229 / NCIMB 13809 / X14) protein is 3-phosphoshikimate 1-carboxyvinyltransferase.